A 289-amino-acid chain; its full sequence is Ribosomal protein L11 methyltransferase (289 aa).

4 residues coordinate S-adenosyl-L-methionine: threonine 135, glycine 156, aspartate 179, and asparagine 225.

The protein belongs to the methyltransferase superfamily. PrmA family.

It is found in the cytoplasm. The catalysed reaction is L-lysyl-[protein] + 3 S-adenosyl-L-methionine = N(6),N(6),N(6)-trimethyl-L-lysyl-[protein] + 3 S-adenosyl-L-homocysteine + 3 H(+). Methylates ribosomal protein L11. In Chlorobaculum tepidum (strain ATCC 49652 / DSM 12025 / NBRC 103806 / TLS) (Chlorobium tepidum), this protein is Ribosomal protein L11 methyltransferase.